We begin with the raw amino-acid sequence, 566 residues long: Pentatricopeptide repeat-containing protein At4g11690 (566 aa).

13 PPR repeats span residues 93–127 (KFRLYEVIINSYVQSQSLNLSISYFNEMVDNGFVP), 128–158 (GSNCFNYLLTFVVGSSSFNQWWSFFNENKSK), 162–196 (DVYSFGILIKGCCEAGEIEKSFDLLIELTEFGFSP), 197–231 (NVVIYTTLIDGCCKKGEIEKAKDLFFEMGKLGLVA), 232–266 (NERTYTVLINGLFKNGVKKQGFEMYEKMQEDGVFP), 267–301 (NLYTYNCVMNQLCKDGRTKDAFQVFDEMRERGVSC), 302–336 (NIVTYNTLIGGLCREMKLNEANKVVDQMKSDGINP), 337–371 (NLITYNTLIDGFCGVGKLGKALSLCRDLKSRGLSP), 372–406 (SLVTYNILVSGFCRKGDTSGAAKMVKEMEERGIKP), 407–441 (SKVTYTILIDTFARSDNMEKAIQLRLSMEELGLVP), 442–476 (DVHTYSVLIHGFCIKGQMNEASRLFKSMVEKNCEP), 477–511 (NEVIYNTMILGYCKEGSSYRALKLLKEMEEKELAP), and 512–546 (NVASYRYMIEVLCKERKSKEAERLVEKMIDSGIDP).

It belongs to the PPR family. P subfamily.

This chain is Pentatricopeptide repeat-containing protein At4g11690, found in Arabidopsis thaliana (Mouse-ear cress).